A 286-amino-acid chain; its full sequence is Bifunctional protein FolD (286 aa).

NADP(+)-binding positions include 166–168 (GAS) and I232.

The protein belongs to the tetrahydrofolate dehydrogenase/cyclohydrolase family. In terms of assembly, homodimer.

The enzyme catalyses (6R)-5,10-methylene-5,6,7,8-tetrahydrofolate + NADP(+) = (6R)-5,10-methenyltetrahydrofolate + NADPH. It carries out the reaction (6R)-5,10-methenyltetrahydrofolate + H2O = (6R)-10-formyltetrahydrofolate + H(+). It participates in one-carbon metabolism; tetrahydrofolate interconversion. In terms of biological role, catalyzes the oxidation of 5,10-methylenetetrahydrofolate to 5,10-methenyltetrahydrofolate and then the hydrolysis of 5,10-methenyltetrahydrofolate to 10-formyltetrahydrofolate. The polypeptide is Bifunctional protein FolD (Shewanella piezotolerans (strain WP3 / JCM 13877)).